Here is a 216-residue protein sequence, read N- to C-terminus: GTP cyclohydrolase 1 (216 aa).

Positions 109, 112, and 180 each coordinate Zn(2+).

Belongs to the GTP cyclohydrolase I family. As to quaternary structure, toroid-shaped homodecamer, composed of two pentamers of five dimers.

It carries out the reaction GTP + H2O = 7,8-dihydroneopterin 3'-triphosphate + formate + H(+). The protein operates within cofactor biosynthesis; 7,8-dihydroneopterin triphosphate biosynthesis; 7,8-dihydroneopterin triphosphate from GTP: step 1/1. The sequence is that of GTP cyclohydrolase 1 from Wigglesworthia glossinidia brevipalpis.